Here is a 165-residue protein sequence, read N- to C-terminus: Nucleotide-binding protein Tfu_2672 (165 aa).

Belongs to the YajQ family.

In terms of biological role, nucleotide-binding protein. The chain is Nucleotide-binding protein Tfu_2672 from Thermobifida fusca (strain YX).